Consider the following 212-residue polypeptide: Stringent starvation protein A homolog (212 aa).

In terms of domain architecture, GST N-terminal spans 9-87 (SVMTLFSNKD…YLDERFPHPP (79 aa)). A GST C-terminal domain is found at 92–212 (YPVSRAKDRL…AAPKNLMDDK (121 aa)).

This sequence belongs to the GST superfamily. HSP26 family.

Forms an equimolar complex with the RNA polymerase holoenzyme (RNAP) but not with the core enzyme. This is Stringent starvation protein A homolog (sspA) from Haemophilus influenzae (strain ATCC 51907 / DSM 11121 / KW20 / Rd).